The primary structure comprises 210 residues: Histone H1A (210 aa).

2 disordered regions span residues 1-49 and 101-210; these read MAEA…VSEQ and KGSG…PKKK. Low complexity-rich tracts occupy residues 26–45 and 129–142; these read KKAA…SGPS and PLAA…AAAK. The H15 domain occupies 42–113; the sequence is SGPSVSEQIV…GASGSFKLNK (72 aa). Basic residues-rich tracts occupy residues 143-153 and 160-180; these read KTAKSPKKPKK and SPKK…KTAV. Low complexity predominate over residues 181 to 192; the sequence is KPKVAAKSPAKA. Residues 193-210 are compositionally biased toward basic residues; that stretch reads KAAKPKVAKAKKAAPKKK.

This sequence belongs to the histone H1/H5 family.

The protein localises to the nucleus. The protein resides in the chromosome. In terms of biological role, histones H1 are necessary for the condensation of nucleosome chains into higher-order structures. The sequence is that of Histone H1A from Xenopus laevis (African clawed frog).